The chain runs to 420 residues: Coiled-coil domain-containing protein 85C (420 aa).

Alanine 2 carries the N-acetylalanine modification. 2 coiled-coil regions span residues 26 to 92 (ELLR…RELC) and 122 to 165 (HEVA…LAAA). The disordered stretch occupies residues 165–271 (AGGAGGGGGG…NGLHDPSSTY (107 aa)). Over residues 166–176 (GGAGGGGGGAG) the composition is skewed to gly residues. Serine 179 carries the post-translational modification Phosphoserine. Residues 185–212 (ASLSGPLAGSAAGSGARDVGDGSSTSSA) show a composition bias toward low complexity. Serine 247 carries the phosphoserine modification.

The protein belongs to the CCDC85 family. As to quaternary structure, may interact with ARVCF, CTNND1, CTNND2 and PKP4. As to expression, predominantly expressed on the surface of the lateral ventricular walls of the developing cerebral cortex.

Its subcellular location is the cell junction. It is found in the tight junction. The protein resides in the adherens junction. In terms of biological role, may play a role in cell-cell adhesion and epithelium development through its interaction with proteins of the beta-catenin family. May play an important role in cortical development, especially in the maintenance of radial glia. The polypeptide is Coiled-coil domain-containing protein 85C (Ccdc85c) (Mus musculus (Mouse)).